The primary structure comprises 1068 residues: Integrator complex subunit 3 homolog (1068 aa).

2 disordered regions span residues 916 to 939 (YPSS…STPS) and 1001 to 1068 (VGRR…NDSD). Phosphoserine is present on residues serine 1038, serine 1039, serine 1043, and serine 1044.

This sequence belongs to the Integrator subunit 3 family. In terms of assembly, belongs to the multiprotein complex Integrator, at least composed of IntS1, IntS2, IntS3, IntS4, omd/IntS5, IntS6, defl/IntS7, IntS8, IntS9, IntS10, IntS11, IntS12, asun/IntS13, IntS14 and IntS15. The core complex associates with protein phosphatase 2A subunits mts/PP2A and Pp2A-29B, to form the Integrator-PP2A (INTAC) complex.

It localises to the nucleus. The protein localises to the cytoplasm. In terms of biological role, component of the integrator complex, a multiprotein complex that terminates RNA polymerase II (Pol II) transcription in the promoter-proximal region of genes. The integrator complex provides a quality checkpoint during transcription elongation by driving premature transcription termination of transcripts that are unfavorably configured for transcriptional elongation: the complex terminates transcription by (1) catalyzing dephosphorylation of the C-terminal domain (CTD) of Pol II subunit Polr2A/Rbp1 and Spt5, and (2) degrading the exiting nascent RNA transcript via endonuclease activity. The integrator complex is also involved in the 3'-end processing of the U7 snRNA, and also the spliceosomal snRNAs U1, U2, U4 and U5. This chain is Integrator complex subunit 3 homolog (IntS3), found in Drosophila sechellia (Fruit fly).